The chain runs to 207 residues: Alpha-1-acid glycoprotein 2 (207 aa).

Residues 1-18 (MALHMILVMVSLLPLLEA) form the signal peptide. The residue at position 19 (glutamine 19) is a Pyrrolidone carboxylic acid. N-linked (GlcNAc...) asparagine glycosylation is found at asparagine 25, asparagine 34, asparagine 76, asparagine 94, and asparagine 104. A disulfide bridge links cysteine 91 with cysteine 184. The tract at residues 188-207 (EKQQLELEKETKKDPEEGQA) is disordered.

It belongs to the calycin superfamily. Lipocalin family. Expressed by the liver and secreted in plasma.

It is found in the secreted. In terms of biological role, functions as a transport protein in the blood stream. Binds various ligands in the interior of its beta-barrel domain. Appears to function in modulating the activity of the immune system during the acute-phase reaction. This chain is Alpha-1-acid glycoprotein 2 (Orm2), found in Mus musculus (Mouse).